A 340-amino-acid polypeptide reads, in one-letter code: Pre-rRNA-processing protein esf-2 (340 aa).

Basic and acidic residues-rich tracts occupy residues 1 to 12 (MPEDDVRNKFLD) and 19 to 32 (DAGH…DFQK). Positions 1-103 (MPEDDVRNKF…KSVLASDLPG (103 aa)) are disordered. Residues 44-64 (DDEDSEADDFTDAEEEHDQDD) show a composition bias toward acidic residues. A compositionally biased stretch (basic and acidic residues) spans 65 to 95 (AESKDAPAKDGQETTDGKEKKDGKKEKEKKS). Residues 124 to 214 (GVVYISRVPP…KKGSYYRDDI (91 aa)) form the RRM domain. Positions 272–329 (AKKASKGSKAGGEGAAQVTESTIPSAAATTTTTTNDDKRRTFKQIPLAKKRKLDETQP) are disordered.

It belongs to the ESF2/ABP1 family.

The protein resides in the nucleus. It localises to the nucleolus. Its function is as follows. Involved in the small subunit (SSU) processome assembly and function, and in the 18S rRNA synthesis. Required for the early cleavages at sites A0, A1 and A2. The chain is Pre-rRNA-processing protein esf-2 (esf-2) from Neurospora crassa (strain ATCC 24698 / 74-OR23-1A / CBS 708.71 / DSM 1257 / FGSC 987).